Reading from the N-terminus, the 459-residue chain is Ribulose bisphosphate carboxylase large chain (459 aa).

Residue Lys4 is modified to N6,N6,N6-trimethyllysine. Residues Asn113 and Thr163 each contribute to the substrate site. Catalysis depends on Lys165, which acts as the Proton acceptor. Residue Lys167 participates in substrate binding. Mg(2+)-binding residues include Lys191, Asp193, and Glu194. An N6-carboxylysine modification is found at Lys191. Catalysis depends on His284, which acts as the Proton acceptor. Substrate-binding residues include Arg285, His317, and Ser369.

Belongs to the RuBisCO large chain family. Type I subfamily. As to quaternary structure, heterohexadecamer of 8 large chains and 8 small chains; disulfide-linked. The disulfide link is formed within the large subunit homodimers. Requires Mg(2+) as cofactor. The disulfide bond which can form in the large chain dimeric partners within the hexadecamer appears to be associated with oxidative stress and protein turnover.

It localises to the plastid. The protein localises to the chloroplast. It carries out the reaction 2 (2R)-3-phosphoglycerate + 2 H(+) = D-ribulose 1,5-bisphosphate + CO2 + H2O. The enzyme catalyses D-ribulose 1,5-bisphosphate + O2 = 2-phosphoglycolate + (2R)-3-phosphoglycerate + 2 H(+). Functionally, ruBisCO catalyzes two reactions: the carboxylation of D-ribulose 1,5-bisphosphate, the primary event in carbon dioxide fixation, as well as the oxidative fragmentation of the pentose substrate in the photorespiration process. Both reactions occur simultaneously and in competition at the same active site. The sequence is that of Ribulose bisphosphate carboxylase large chain from Ceratopetalum gummiferum (New South Wales Christmas bush).